We begin with the raw amino-acid sequence, 638 residues long: MFAPLGLFRDIPCPQREECSLIACLFSHRDLNSAPAAQDQVLEQKEPAKLPPKRLKLEPRPEAKETPKDDLRHVSDSGRSTPVKKTTAPATNAENISPVSRQPNIPKNTATAPIKRELNANTGSSIPPRRAPKEALNPRMIQKSPATYNVRMAILKKLHGTLCSLNDQLAKDKALEDKCLILTPDELITMALDEEEKVAKESPTVYSNVVKLRIVKLSRMSKEDWAKELKDYLNKKYYKIKAEPVQKEPKPFKTDLSVEEEIAVASQLITPLQGLEDFGYVTRVPTAEEIEIAKRGVAEAKGWEKCERCNARFQVFPGRREDGTLTSGGTCTYHPGKSFYPPRKKTDHITGTMREGYFTCCNQKLGESSGCTTGATHVYKVSETKRLASILQFEKTPENPDLHNPTPICFDCEMGYTTLGMELIRLTAVSWPEGKKVLDVLVRPLGEVLDLNSRFSGVFPEHYTNALPYSTAPTKSSAPSSSSPSQLQLVSSPAAARTLLFNLLTPSTPLIGHAIDNDLNACRIIHPTVIDTAILYPHPGGGLPYRMSLRTLAKKHLDREIQTGGASGKQGHDSVEDALATGDLVRVKAGLVWGRLKEKGWIVEEGRLVAPDSSSNTVSMQTKLGEGAGAKRAREGTS.

A disordered region spans residues 37–136 (AQDQVLEQKE…PPRRAPKEAL (100 aa)). Basic and acidic residues predominate over residues 55–76 (LKLEPRPEAKETPKDDLRHVSD). The span at 77-111 (SGRSTPVKKTTAPATNAENISPVSRQPNIPKNTAT) shows a compositional bias: polar residues. Residues 408–584 (ICFDCEMGYT…VEDALATGDL (177 aa)) enclose the Exonuclease domain. Polar residues predominate over residues 612–622 (DSSSNTVSMQT). A disordered region spans residues 612 to 638 (DSSSNTVSMQTKLGEGAGAKRAREGTS).

Belongs to the REXO1/REXO3 family.

The protein resides in the cytoplasm. It is found in the nucleus. Functionally, 3' to 5' exoribonuclease required for proper 3' end maturation of MRP RNA and of the U5L snRNA. The polypeptide is RNA exonuclease 3 (rex3) (Emericella nidulans (strain FGSC A4 / ATCC 38163 / CBS 112.46 / NRRL 194 / M139) (Aspergillus nidulans)).